A 147-amino-acid chain; its full sequence is Hemoglobin subunit gamma (147 aa).

The region spanning 3–147 (YFTAEEKAAI…VASALARKYH (145 aa)) is the Globin domain. Heme b is bound by residues histidine 64 and histidine 93.

Belongs to the globin family. In terms of assembly, heterotetramer of two alpha chains and two gamma chains in fetal hemoglobin (Hb F). Red blood cells.

Gamma chains make up the fetal hemoglobin F, in combination with alpha chains. The polypeptide is Hemoglobin subunit gamma (HBG) (Dugong dugon (Dugong)).